The chain runs to 826 residues: Capsid-associated protein Vp91 (826 aa).

Residues 1-18 (MSDVVLLVLAIIFIIIFV) form the signal peptide. The segment at 147–196 (CVPINPCDTRAPGLYAMDEHLLDALVHSQHLDKDYTINAHLQHPTLYLRC) adopts a C2HC BV-type zinc-finger fold. Intrachain disulfides connect Cys207-Cys220 and Cys260-Cys273. Residue Asn210 is glycosylated (N-linked (GlcNAc...) asparagine; by host). Residues 223–281 (NELCQGRPDGYVLDYFPETLLVNEFVECYESKHVVKQCPEQHVFDRQLMTCVQAHPCAF) form the Chitin-binding type-2 domain. N-linked (GlcNAc...) asparagine; by host glycans are attached at residues Asn333, Asn371, Asn413, Asn510, Asn520, and Asn609. A disordered region spans residues 651 to 679 (GDGDHWGPDLPPPVQPDSEPDESEPEPEV). Residues 668 to 677 (SEPDESEPEP) are compositionally biased toward acidic residues. The N-linked (GlcNAc...) asparagine; by host glycan is linked to Asn722.

The protein resides in the virion. Its function is as follows. Probable capsid-associated protein. The polypeptide is Capsid-associated protein Vp91 (Epiphyas postvittana nucleopolyhedrovirus (EppoMNPV)).